A 239-amino-acid polypeptide reads, in one-letter code: Guanylate kinase (239 aa).

The 179-residue stretch at 19-197 folds into the Guanylate kinase-like domain; the sequence is GLLIVVTGAS…AVSELLAVQQ (179 aa). 26-33 contributes to the ATP binding site; that stretch reads GASGVGKG.

The protein belongs to the guanylate kinase family.

The protein localises to the cytoplasm. It carries out the reaction GMP + ATP = GDP + ADP. Its function is as follows. Essential for recycling GMP and indirectly, cGMP. This is Guanylate kinase (gmk) from Deinococcus radiodurans (strain ATCC 13939 / DSM 20539 / JCM 16871 / CCUG 27074 / LMG 4051 / NBRC 15346 / NCIMB 9279 / VKM B-1422 / R1).